A 146-amino-acid chain; its full sequence is MAPSSNKVGKAIQAKKAVVKGSKTNVRKNVRTSVHFRRPKTLVTARAPRYARKSAPARDKLDSFAVIKAPHTTESSMKKIEDHNTLVFIVDEKANKHHIKRAVHALYNVKAVKVNTLITPLQQKKAYVRLASDYDALDVANKIGFI.

The interval 1-22 is disordered; it reads MAPSSNKVGKAIQAKKAVVKGS.

Belongs to the universal ribosomal protein uL23 family.

This protein binds to a specific region on the 26S rRNA. This Caenorhabditis elegans protein is Large ribosomal subunit protein uL23B (rpl-23A.2).